The following is a 152-amino-acid chain: Protein ripply3 (152 aa).

Residues 1-24 (MRPEAAGVREARGRLCHCPGDDPG) are compositionally biased toward basic and acidic residues. Disordered stretches follow at residues 1–76 (MRPE…GAFG) and 113–152 (FYNDDSESGSEEEQEEEAQPNHLQCLEAEVRDSAQEERAE). The WRPW motif motif lies at 40-43 (WRPW). The interval 79-114 (HPVRLYLPVSKRQEYLQSSGEKVLASFPVQATIHFY) is ripply homology domain. Positions 116–130 (DDSESGSEEEQEEEA) are enriched in acidic residues. Positions 140 to 152 (AEVRDSAQEERAE) are enriched in basic and acidic residues.

It belongs to the ripply family. In terms of assembly, interacts with TBX1.

Its subcellular location is the nucleus. Acts as a transcriptional corepressor. Negative regulator of the transcriptional activity of TBX1. Plays a role in the development of the pharyngeal apparatus and derivatives. This chain is Protein ripply3 (Ripply3), found in Mus musculus (Mouse).